The sequence spans 318 residues: Ferredoxin--NADP reductase (318 aa).

Residues Asp-33, Gln-41, Tyr-46, Val-84, Phe-115, Asp-276, and Thr-316 each contribute to the FAD site.

Belongs to the ferredoxin--NADP reductase type 2 family. Homodimer. FAD serves as cofactor.

The catalysed reaction is 2 reduced [2Fe-2S]-[ferredoxin] + NADP(+) + H(+) = 2 oxidized [2Fe-2S]-[ferredoxin] + NADPH. This is Ferredoxin--NADP reductase from Lactobacillus gasseri (strain ATCC 33323 / DSM 20243 / BCRC 14619 / CIP 102991 / JCM 1131 / KCTC 3163 / NCIMB 11718 / NCTC 13722 / AM63).